Consider the following 329-residue polypeptide: Probable cell division protein WhiA (329 aa).

Positions 276-309 (SLEELGKVHEPPLTKDAIAGRIRRLLALADKTAR) form a DNA-binding region, H-T-H motif. Residues 308–329 (ARSNGEPTTLESLPVEMRDDRG) are disordered. Polar residues predominate over residues 309-318 (RSNGEPTTLE).

Belongs to the WhiA family.

In terms of biological role, involved in cell division and chromosome segregation. The protein is Probable cell division protein WhiA of Cutibacterium acnes (strain DSM 16379 / KPA171202) (Propionibacterium acnes).